We begin with the raw amino-acid sequence, 109 residues long: FK506-binding protein (109 aa).

The region spanning 20–108 is the PPIase FKBP-type domain; it reads GKEITVHYTG…IFEVELLKVY (89 aa).

The protein belongs to the FKBP-type PPIase family.

The enzyme catalyses [protein]-peptidylproline (omega=180) = [protein]-peptidylproline (omega=0). Inhibited by FK506. PPIases accelerate the folding of proteins. The chain is FK506-binding protein (fbp) from Neisseria meningitidis serogroup B (strain ATCC BAA-335 / MC58).